The chain runs to 431 residues: tRNA(Ile)-lysidine synthase (431 aa).

Residue 26-31 (SGGIDS) coordinates ATP.

Belongs to the tRNA(Ile)-lysidine synthase family.

Its subcellular location is the cytoplasm. It carries out the reaction cytidine(34) in tRNA(Ile2) + L-lysine + ATP = lysidine(34) in tRNA(Ile2) + AMP + diphosphate + H(+). In terms of biological role, ligates lysine onto the cytidine present at position 34 of the AUA codon-specific tRNA(Ile) that contains the anticodon CAU, in an ATP-dependent manner. Cytidine is converted to lysidine, thus changing the amino acid specificity of the tRNA from methionine to isoleucine. This is tRNA(Ile)-lysidine synthase from Wolbachia sp. subsp. Brugia malayi (strain TRS).